An 80-amino-acid chain; its full sequence is DNA-binding protein S1FA2 (80 aa).

The short motif at 54-59 (PPRKKK) is the Nuclear localization signal element. Residues 55 to 70 (PRKKKPVSKKKMKREK) are compositionally biased toward basic residues. Positions 55 to 80 (PRKKKPVSKKKMKREKLKQGVSAPGE) are disordered.

It belongs to the S1FA transcription factor family.

Its subcellular location is the nucleus. Functionally, DNA-binding protein that specifically recognizes a negative element (S1F) within the RPS1 promoter. This chain is DNA-binding protein S1FA2 (S1FA2), found in Oryza sativa subsp. japonica (Rice).